We begin with the raw amino-acid sequence, 416 residues long: MSLSSKLTVKDLDVTGKRVFIRVDFNVPLDGKKITSNQRIVAALPTIQYVLEKKPKAIVLASHLGRPNGEVNDKYSLAPVADELSRLLQKPVTFLHDCVGEEVTNAVNNAKDGEVFLLENLRFHIEEEGSRKVDGNKVKADKAAVTKFREQLSSLADVYVNDAFGTAHRAHSSIVGFDLPNRAAGFLLSKELQYFAKALENPTRPFLAILGGAKVADKIQLIDNLLDKVDSLIIGGGMAFTFKKVLENTEIGDSIYDAAGAELVPKLVEKAKKNNVKIVLPTDFVIGDKFSADANTKVVTDKEGIPSGWQGLDNGPESRKAFAATVAEAKTIVWNGPPGVFEFAPFAKGTEALLDAVVASSQAGNTVIIGGGDTATVAKKYGVVDKISHVSTGGGASLELLEGKELPGVTFLSNKQ.

Residues valine 23, aspartate 24, phenylalanine 25, asparagine 26, glutamine 38, arginine 39, serine 62, histidine 63, glycine 65, arginine 66, leucine 121, arginine 122, histidine 168, and arginine 169 each contribute to the (2R)-3-phosphoglycerate site. Residue glycine 212 coordinates ADP. Glycine 212 provides a ligand contact to CDP. Residues alanine 213 and lysine 214 each coordinate AMP. Alanine 213 serves as a coordination point for ATP. Mg(2+) is bound at residue alanine 213. Mg(2+)-binding residues include alanine 216 and aspartate 217. Aspartate 217 lines the CDP pocket. Lysine 218 contributes to the AMP binding site. An ATP-binding site is contributed by lysine 218. Residue glycine 236 coordinates ADP. Glycine 236 is a CDP binding site. AMP is bound by residues glycine 237 and glycine 311. Glycine 237 and glycine 311 together coordinate ATP. Positions 336 and 341 each coordinate CDP. Phenylalanine 341 is a binding site for ADP. Residue glutamate 342 participates in AMP binding. Residues glutamate 342, aspartate 373, and threonine 374 each coordinate ATP. Aspartate 373 is a Mg(2+) binding site.

It belongs to the phosphoglycerate kinase family. As to quaternary structure, monomer. Requires Mg(2+) as cofactor.

Its subcellular location is the cytoplasm. It is found in the mitochondrion. The enzyme catalyses (2R)-3-phosphoglycerate + ATP = (2R)-3-phospho-glyceroyl phosphate + ADP. It participates in carbohydrate degradation; glycolysis; pyruvate from D-glyceraldehyde 3-phosphate: step 2/5. Catalyzes one of the two ATP producing reactions in the glycolytic pathway via the reversible conversion of 1,3-diphosphoglycerate to 3-phosphoglycerate. Both L- and D- forms of purine and pyrimidine nucleotides can be used as substrates, but the activity is much lower on pyrimidines. Negatively regulates the biosynthesis of acetyl-CoA from pyruvate in the mitochondrion. In Kluyveromyces lactis (strain ATCC 8585 / CBS 2359 / DSM 70799 / NBRC 1267 / NRRL Y-1140 / WM37) (Yeast), this protein is Phosphoglycerate kinase (PGK).